The sequence spans 205 residues: Endothelial cell-specific chemotaxis regulator (205 aa).

The first 24 residues, 1–24 (MGTAGAMQLCWVILGFLLFRGHNS), serve as a signal peptide directing secretion. Topologically, residues 25 to 124 (QPTMTQTSSS…TSETVLTVAA (100 aa)) are extracellular. Polar residues-rich tracts occupy residues 49–71 (SSNP…STGT) and 86–101 (SRDT…TTMS). The disordered stretch occupies residues 49-101 (SSNPGYIPSSEANRPSHLSSTGTPGAGVPSSGRDGGTSRDTFQTVPPNSTTMS). The chain crosses the membrane as a helical span at residues 125 to 145 (FGVISFIVILVVVVIILVGVV). Residues 146 to 205 (SLRFKCRKSKESEDPQKPGSSGLSESCSTANGEKDSITLISMKNINMNNGKQSLSAEKVL) lie on the Cytoplasmic side of the membrane. The segment at 153–175 (KSKESEDPQKPGSSGLSESCSTA) is disordered. A compositionally biased stretch (polar residues) spans 163–175 (PGSSGLSESCSTA). Serine 198 is subject to Phosphoserine.

It belongs to the ECSCR family. In terms of assembly, interacts with FLNA. Interacts with the 20S proteasome subunit PSMA7. Post-translationally, may be heavily O-glycosylated. As to expression, highest expression in endothelial cells. Also detected in vascular smooth muscle, macrophages, lymphocytes, and mast cells.

It localises to the cell membrane. The protein resides in the cytoplasm. Regulates endothelial chemotaxis and tube formation. Has a role in angiogenesis and apoptosis via modulation of the actin cytoskeleton and facilitation of proteasomal degradation of the apoptosis inhibitors BIRC3/IAP1 and BIRC2/IAP2. The protein is Endothelial cell-specific chemotaxis regulator (ECSCR) of Homo sapiens (Human).